The sequence spans 149 residues: Ribose-5-phosphate isomerase B (149 aa).

Residue 9–10 (DH) coordinates D-ribulose 5-phosphate. Cysteine 66 (proton acceptor) is an active-site residue. Position 67 to 71 (67 to 71 (GTGVG)) interacts with D-ribulose 5-phosphate. The active-site Proton donor is the histidine 99. D-ribulose 5-phosphate is bound by residues asparagine 100, arginine 110, arginine 133, and arginine 137.

This sequence belongs to the LacAB/RpiB family. In terms of assembly, homodimer, and homotetramer.

It catalyses the reaction aldehydo-D-ribose 5-phosphate = D-ribulose 5-phosphate. The catalysed reaction is D-allose 6-phosphate = D-allulose 6-phosphate. It functions in the pathway carbohydrate degradation; pentose phosphate pathway; D-ribose 5-phosphate from D-ribulose 5-phosphate (non-oxidative stage): step 1/1. Inhibited by iodoacetate and glucose 6-phosphate. Its function is as follows. Catalyzes the interconversion of ribulose-5-P and ribose-5-P. It probably also has activity on D-allose 6-phosphate. This chain is Ribose-5-phosphate isomerase B, found in Escherichia coli (strain K12).